A 261-amino-acid chain; its full sequence is Small ribosomal subunit protein eS1z (261 aa).

A compositionally biased stretch (basic residues) spans 1–18 (MAVGKNKRISKGKKGGKK). Residues 1 to 20 (MAVGKNKRISKGKKGGKKKA) are disordered.

It belongs to the eukaryotic ribosomal protein eS1 family. As to quaternary structure, component of the small ribosomal subunit. Mature ribosomes consist of a small (40S) and a large (60S) subunit. The 40S subunit contains about 33 different proteins and 1 molecule of RNA (18S). The 60S subunit contains about 49 different proteins and 3 molecules of RNA (25S, 5.8S and 5S).

It is found in the cytoplasm. This Vitis vinifera (Grape) protein is Small ribosomal subunit protein eS1z.